The sequence spans 416 residues: Protein MID1-COMPLEMENTING ACTIVITY 2 (416 aa).

Residues 191-219 are a coiled coil; sequence CEALKTEEEKLQLELQRSRARYDADQCEV. Residues 338-354 form a helical membrane-spanning segment; that stretch reads LIVYSLILSCCCYTCCI.

In terms of tissue distribution, expressed in roots, leaves, stems, flowers and siliques. In the root, high levels of expression in vascular tissues, in the stele and endodermis, but no expression in the cortex, epidermis, root cap, promeristem and adjacent elongation zone of the primary root. Not expressed in root hairs. Detected in shoot apical meristem, leaf mesophyll cells and vascular tissues, upper half of inflorescence, but not in petioles of rosette leaves.

The protein resides in the cell membrane. Inhibited by GdCl(3), but not by verapamil. Functionally, calcium-permeable stretch-activated channel component. Probably involved in mechanosensing and in mechano-stimulated calcium uptake mechanism. The chain is Protein MID1-COMPLEMENTING ACTIVITY 2 (MCA2) from Arabidopsis thaliana (Mouse-ear cress).